We begin with the raw amino-acid sequence, 363 residues long: 3-isopropylmalate dehydrogenase A (363 aa).

Residue 78 to 89 (GPKWGTGAVRPE) participates in NAD(+) binding. 4 residues coordinate substrate: arginine 96, arginine 106, arginine 135, and aspartate 222. Aspartate 222, aspartate 247, and aspartate 251 together coordinate Mg(2+). NAD(+) is bound at residue 287 to 299 (GSAPDIAGKGIVN).

This sequence belongs to the isocitrate and isopropylmalate dehydrogenases family. As to quaternary structure, homodimer. Mg(2+) is required as a cofactor. The cofactor is Mn(2+).

It localises to the cytoplasm. The enzyme catalyses (2R,3S)-3-isopropylmalate + NAD(+) = 4-methyl-2-oxopentanoate + CO2 + NADH. It functions in the pathway amino-acid biosynthesis; L-leucine biosynthesis; L-leucine from 3-methyl-2-oxobutanoate: step 3/4. In terms of biological role, catalyzes the oxidation of 3-carboxy-2-hydroxy-4-methylpentanoate (3-isopropylmalate) to 3-carboxy-4-methyl-2-oxopentanoate. The product decarboxylates to 4-methyl-2 oxopentanoate. This chain is 3-isopropylmalate dehydrogenase A (leu2A), found in Aspergillus niger.